The sequence spans 54 residues: VVTVDCSGYPTHACTLELKPLCGSDNQTYSNKCGFCNAVAQSNGTLTLSHFGKC.

The Kazal-like domain occupies 4–54 (VDCSGYPTHACTLELKPLCGSDNQTYSNKCGFCNAVAQSNGTLTLSHFGKC). Cystine bridges form between C6–C36, C14–C33, and C22–C54. The N-linked (GlcNAc...) asparagine glycan is linked to N43.

The protein localises to the secreted. In Leipoa ocellata (Malleefowl), this protein is Ovomucoid.